A 205-amino-acid chain; its full sequence is Ribosomal RNA small subunit methyltransferase G (205 aa).

S-adenosyl-L-methionine is bound by residues G70, L75, I121–E122, and R136.

This sequence belongs to the methyltransferase superfamily. RNA methyltransferase RsmG family.

The protein localises to the cytoplasm. The catalysed reaction is guanosine(527) in 16S rRNA + S-adenosyl-L-methionine = N(7)-methylguanosine(527) in 16S rRNA + S-adenosyl-L-homocysteine. In terms of biological role, specifically methylates the N7 position of guanine in position 527 of 16S rRNA. This Methylococcus capsulatus (strain ATCC 33009 / NCIMB 11132 / Bath) protein is Ribosomal RNA small subunit methyltransferase G.